The sequence spans 427 residues: 3-phosphoshikimate 1-carboxyvinyltransferase (427 aa).

3-phosphoshikimate-binding residues include K20, S21, and R25. Position 20 (K20) interacts with phosphoenolpyruvate. Phosphoenolpyruvate contacts are provided by G92 and R120. Residues S166, Q168, D312, and K339 each contribute to the 3-phosphoshikimate site. Residue Q168 coordinates phosphoenolpyruvate. D312 serves as the catalytic Proton acceptor. Phosphoenolpyruvate-binding residues include R343 and R385.

This sequence belongs to the EPSP synthase family. In terms of assembly, monomer.

Its subcellular location is the cytoplasm. The catalysed reaction is 3-phosphoshikimate + phosphoenolpyruvate = 5-O-(1-carboxyvinyl)-3-phosphoshikimate + phosphate. It functions in the pathway metabolic intermediate biosynthesis; chorismate biosynthesis; chorismate from D-erythrose 4-phosphate and phosphoenolpyruvate: step 6/7. Functionally, catalyzes the transfer of the enolpyruvyl moiety of phosphoenolpyruvate (PEP) to the 5-hydroxyl of shikimate-3-phosphate (S3P) to produce enolpyruvyl shikimate-3-phosphate and inorganic phosphate. This chain is 3-phosphoshikimate 1-carboxyvinyltransferase, found in Streptococcus uberis (strain ATCC BAA-854 / 0140J).